The primary structure comprises 356 residues: Na(+)/H(+) exchange regulatory cofactor NHE-RF1 (356 aa).

The residue at position 2 (Ser-2) is an N-acetylserine. Residues Ser-2 and Ser-46 each carry the phosphoserine modification. The PDZ 1 domain occupies 14–94 (LCCLEKGPNG…AVRLLVVDPE (81 aa)). Residues 113–142 (AQEKSEHTEPPAAADTKKAGDQNEAEKSHL) are disordered. The PDZ 2 domain occupies 151–231 (LCTMKKGPNG…EAKLLVVDKE (81 aa)). The segment at 265 to 356 (NSREALVEPA…SKKNELFSNL (92 aa)) is disordered. Phosphoserine is present on residues Ser-266, Ser-277, Ser-287, and Ser-288. A compositionally biased stretch (low complexity) spans 272-288 (EPASESPRPALARSASS). Thr-290 is subject to Phosphothreonine. A phosphoserine mark is found at Ser-291 and Ser-299. Residues 307–317 (EPSSTSSSSDP) are compositionally biased toward low complexity. Residues 346 to 356 (WSKKNELFSNL) show a composition bias toward basic and acidic residues.

In terms of assembly, homodimer, and heterodimer with NHERF2. Binds the N-termini of EZR, RDX and MSN. Binds the C-termini of PDGFRA, PDGFRB, ADRB2, NOS2 and CFTR. Binds ARHGAP17, EPI64, RACK1, OPRK1, GNAQ, CTNNB1 and PLCB3. Binds PDZK1. Interacts with CLCN3. Binds the C-terminus of PAG1. In resting T-cells, part of a PAG1-NHERF1-MSN complex which is disrupted upon TCR activation. Forms a complex with CFTR and SLC4A7. Forms a complex with SLC4A7 and ATP6V1B1. Interacts with TRPC4 (via the PDZ-binding domain). Directly interacts with HTR4. Interacts (via the PDZ 1 domain) with PODXL (via the C-terminal PDZ-binding motif DTHL); interaction is not detected in glomerular epithelium cells. Interacts (via the PDZ 1 domain) with PODXL (via the C-terminal PDZ-binding motif DTHL); the interaction take place early in the secretory pathway and is necessary for its apical membrane sorting. Interacts with SLC26A3. Interacts with MCC. Interacts with SLC34A1. Interacts (via the PDZ domains) with SLC26A6 isoform 4 and isoform 5. Interacts (via PDZ domains) with ACE2 (via PDZ-binding motif); the interaction may enhance ACE2 membrane residence.

It is found in the cytoplasm. The protein localises to the apical cell membrane. The protein resides in the cell projection. It localises to the filopodium. Its subcellular location is the ruffle. It is found in the microvillus. The protein localises to the endomembrane system. In terms of biological role, scaffold protein that connects plasma membrane proteins with members of the ezrin/moesin/radixin family and thereby helps to link them to the actin cytoskeleton and to regulate their surface expression. Necessary for recycling of internalized ADRB2. Was first known to play a role in the regulation of the activity and subcellular location of SLC9A3. Necessary for cAMP-mediated phosphorylation and inhibition of SLC9A3. Involved in sperm capacitation. May participate in the regulation of the chloride and bicarbonate homeostasis in spermatozoa. May enhance Wnt signaling. May participate in HTR4 targeting to microvilli. Involved in the regulation of phosphate reabsorption in the renal proximal tubules. The protein is Na(+)/H(+) exchange regulatory cofactor NHE-RF1 (Nherf1) of Rattus norvegicus (Rat).